Consider the following 285-residue polypeptide: Nucleotide-binding protein Pmen_0867 (285 aa).

An ATP-binding site is contributed by 8-15; it reads GRSGSGKS. 60-63 contacts GTP; sequence DARN.

It belongs to the RapZ-like family.

Functionally, displays ATPase and GTPase activities. This is Nucleotide-binding protein Pmen_0867 from Ectopseudomonas mendocina (strain ymp) (Pseudomonas mendocina).